A 723-amino-acid chain; its full sequence is F-box protein MAX2 homolog B (723 aa).

The 54-residue stretch at 2 to 55 (AKTPIPFTTLNDLPDVILSNIIAAVSDTRSRNATALVCHKWLVLERSTRTSLTL) folds into the F-box domain.

As to quaternary structure, part of a putative SCF (SKP1/Cullin/F-box) ubiquitin ligase complex. Interacts with KAI2IA in the presence of (-)-germacrene D. In terms of tissue distribution, mainly expressed in fully expanded leaves, lateral roots, axillary and shoot apex, and, to a lower extent, in internodes and nodes.

Its subcellular location is the nucleus. It is found in the cytoplasm. Component of SCF(ASK-cullin-F-box) E3 ubiquitin ligase complexes, which may mediate the ubiquitination and subsequent proteasomal degradation of target proteins. Is necessary for responses to strigolactones and may be involved in the ubiquitin-mediated degradation of specific proteins that activate axillary growth. Targets probably SMAX1A to degradation upon the formation of an E3 SCF ubiquitin ligase complex (ASK-cullin-F-box) containing MAX2B and KAI2IA in response to (-)-germacrene D in the stigma. In Petunia hybrida (Petunia), this protein is F-box protein MAX2 homolog B.